A 1447-amino-acid chain; its full sequence is Baculoviral IAP repeat-containing protein 1b (1447 aa).

3 BIR repeats span residues 60-127 (EAKR…CEFL), 159-227 (EEAR…CEFL), and 278-345 (EELR…CVFL). Zn(2+) contacts are provided by Cys-315, Cys-318, His-335, and Cys-342. The 295-residue stretch at 508–802 (SVMCVEGEAG…EFLAAVRLTE (295 aa)) folds into the NACHT domain. Lys-520 is a binding site for ATP.

Component of the NLRC4 inflammasome, at least composed of NLRC4, caspase-1 (CASP1) and some NAIP protein. Interacts with S.typhimurium (Salmonella) PrgJ and B.thailandensis BsaK.

Sensor component of the NLRC4 inflammasome that specifically recognizes and binds type III secretion system (T3SS) rod proteins such as S.typhimurium (Salmonella) PrgJ and B.thailandensis BsaK from pathogenic bacteria. Association of pathogenic bacteria proteins drives in turn drive assembly and activation of the NLRC4 inflammasome, promoting caspase-1 activation, cytokine production and macrophage pyroptosis. The NLRC4 inflammasome is activated as part of the innate immune response to a range of intracellular bacteria. The NLRC4 inflammasome senses Gram-negative bacteria such as L.pneumophila and P.aeruginosa, enteric pathogens S.typhimurium (Salmonella) and S.flexneri. Prevents motor-neuron apoptosis induced by a variety of signals. The chain is Baculoviral IAP repeat-containing protein 1b (Naip2) from Mus musculus (Mouse).